The primary structure comprises 411 residues: Multifunctional CCA protein (411 aa).

ATP-binding residues include Gly8 and Arg11. 2 residues coordinate CTP: Gly8 and Arg11. Residues Asp21 and Asp23 each contribute to the Mg(2+) site. Residues Arg91, Arg143, and Arg146 each contribute to the ATP site. CTP is bound by residues Arg91, Arg143, and Arg146. One can recognise an HD domain in the interval 232 to 333; that stretch reads TGVHVMMVID…MRLLERCDAL (102 aa).

Belongs to the tRNA nucleotidyltransferase/poly(A) polymerase family. Bacterial CCA-adding enzyme type 1 subfamily. In terms of assembly, monomer. Can also form homodimers and oligomers. It depends on Mg(2+) as a cofactor. Ni(2+) is required as a cofactor.

It catalyses the reaction a tRNA precursor + 2 CTP + ATP = a tRNA with a 3' CCA end + 3 diphosphate. The catalysed reaction is a tRNA with a 3' CCA end + 2 CTP + ATP = a tRNA with a 3' CCACCA end + 3 diphosphate. Catalyzes the addition and repair of the essential 3'-terminal CCA sequence in tRNAs without using a nucleic acid template. Adds these three nucleotides in the order of C, C, and A to the tRNA nucleotide-73, using CTP and ATP as substrates and producing inorganic pyrophosphate. tRNA 3'-terminal CCA addition is required both for tRNA processing and repair. Also involved in tRNA surveillance by mediating tandem CCA addition to generate a CCACCA at the 3' terminus of unstable tRNAs. While stable tRNAs receive only 3'-terminal CCA, unstable tRNAs are marked with CCACCA and rapidly degraded. The protein is Multifunctional CCA protein of Cupriavidus necator (strain ATCC 17699 / DSM 428 / KCTC 22496 / NCIMB 10442 / H16 / Stanier 337) (Ralstonia eutropha).